Here is a 471-residue protein sequence, read N- to C-terminus: GTPase Der (471 aa).

2 EngA-type G domains span residues 3 to 166 (PTLA…EPEA) and 177 to 350 (IKLA…SSAT). Residues 9-16 (GRPNVGKS), 56-60 (DTGGI), 118-121 (NKVD), 183-190 (GRPNVGKS), 230-234 (DTAGV), and 295-298 (NKWD) contribute to the GTP site. Residues 351 to 435 (EKLNTNFLTK…PIRFEFKSSE (85 aa)) enclose the KH-like domain. The tract at residues 432-471 (KSSENPFAGRKNAMSKKPEHPSRRANSGGKSINRRPRPKS) is disordered.

The protein belongs to the TRAFAC class TrmE-Era-EngA-EngB-Septin-like GTPase superfamily. EngA (Der) GTPase family. Associates with the 50S ribosomal subunit.

Its function is as follows. GTPase that plays an essential role in the late steps of ribosome biogenesis. This is GTPase Der from Saccharophagus degradans (strain 2-40 / ATCC 43961 / DSM 17024).